The sequence spans 219 residues: Dehydration-responsive element-binding protein 1E (219 aa).

A compositionally biased stretch (low complexity) spans 1–19 (MEWAYYGSGYSSSGTPSPV). The disordered stretch occupies residues 1–44 (MEWAYYGSGYSSSGTPSPVGGDGDEDSYMTVSSAPPKRRAGRTK). The AP2/ERF DNA-binding region spans 52 to 109 (VYKGVRSRNPGRWVCEVREPHGKQRIWLGTFETAEMAARAHDVAAMALRGRAACLNFA).

This sequence belongs to the AP2/ERF transcription factor family. ERF subfamily.

Its subcellular location is the nucleus. Its function is as follows. Transcriptional activator that binds specifically to the DNA sequence 5'-[AG]CCGAC-3'. Binding to the C-repeat/DRE element mediates high salinity- and dehydration-inducible transcription. In Oryza sativa subsp. indica (Rice), this protein is Dehydration-responsive element-binding protein 1E (DREB1E).